A 251-amino-acid chain; its full sequence is Hydroxyacylglutathione hydrolase (251 aa).

Zn(2+)-binding residues include His53, His55, Asp57, His58, His110, Asp127, and His165.

It belongs to the metallo-beta-lactamase superfamily. Glyoxalase II family. In terms of assembly, monomer. It depends on Zn(2+) as a cofactor.

The enzyme catalyses an S-(2-hydroxyacyl)glutathione + H2O = a 2-hydroxy carboxylate + glutathione + H(+). It functions in the pathway secondary metabolite metabolism; methylglyoxal degradation; (R)-lactate from methylglyoxal: step 2/2. Functionally, thiolesterase that catalyzes the hydrolysis of S-D-lactoyl-glutathione to form glutathione and D-lactic acid. The chain is Hydroxyacylglutathione hydrolase from Yersinia pseudotuberculosis serotype IB (strain PB1/+).